Consider the following 854-residue polypeptide: DNA mismatch repair protein MutS (854 aa).

Residue 616 to 623 coordinates ATP; that stretch reads GPNMGGKS.

It belongs to the DNA mismatch repair MutS family.

Its function is as follows. This protein is involved in the repair of mismatches in DNA. It is possible that it carries out the mismatch recognition step. This protein has a weak ATPase activity. This is DNA mismatch repair protein MutS from Pectobacterium atrosepticum (strain SCRI 1043 / ATCC BAA-672) (Erwinia carotovora subsp. atroseptica).